Consider the following 872-residue polypeptide: Alanine--tRNA ligase (872 aa).

Residues His566, His570, Cys668, and His672 each contribute to the Zn(2+) site.

The protein belongs to the class-II aminoacyl-tRNA synthetase family. Requires Zn(2+) as cofactor.

It is found in the cytoplasm. The catalysed reaction is tRNA(Ala) + L-alanine + ATP = L-alanyl-tRNA(Ala) + AMP + diphosphate. Functionally, catalyzes the attachment of alanine to tRNA(Ala) in a two-step reaction: alanine is first activated by ATP to form Ala-AMP and then transferred to the acceptor end of tRNA(Ala). Also edits incorrectly charged Ser-tRNA(Ala) and Gly-tRNA(Ala) via its editing domain. In Lactococcus lactis subsp. lactis (strain IL1403) (Streptococcus lactis), this protein is Alanine--tRNA ligase.